The chain runs to 88 residues: Small ribosomal subunit protein bS20 (88 aa).

The protein belongs to the bacterial ribosomal protein bS20 family.

Functionally, binds directly to 16S ribosomal RNA. This is Small ribosomal subunit protein bS20 from Bradyrhizobium diazoefficiens (strain JCM 10833 / BCRC 13528 / IAM 13628 / NBRC 14792 / USDA 110).